A 455-amino-acid chain; its full sequence is ATP-dependent protease ATPase subunit HslU (455 aa).

ATP is bound by residues valine 23, 65–70, aspartate 266, glutamate 333, and arginine 405; that span reads GVGKTE.

This sequence belongs to the ClpX chaperone family. HslU subfamily. In terms of assembly, a double ring-shaped homohexamer of HslV is capped on each side by a ring-shaped HslU homohexamer. The assembly of the HslU/HslV complex is dependent on binding of ATP.

The protein resides in the cytoplasm. Its function is as follows. ATPase subunit of a proteasome-like degradation complex; this subunit has chaperone activity. The binding of ATP and its subsequent hydrolysis by HslU are essential for unfolding of protein substrates subsequently hydrolyzed by HslV. HslU recognizes the N-terminal part of its protein substrates and unfolds these before they are guided to HslV for hydrolysis. The protein is ATP-dependent protease ATPase subunit HslU of Xanthomonas euvesicatoria pv. vesicatoria (strain 85-10) (Xanthomonas campestris pv. vesicatoria).